We begin with the raw amino-acid sequence, 377 residues long: MVLESTMVCVDNSEYMRNGDFLPTRLQAQQDAVNIVCHSKTRSNPENNVGLITLANDCEVLTTLTPDTGRILSKLHTVQPKGKITFCTGIRVAHLALKHRQGKNHKMRIIAFVGSPVEDNEKDLVKLAKRLKKEKVNVDIINFGEEEVNTEKLTAFVNTLNGKDGTGSHLVTVPPGPSLADALISSPILAGEGGAMLGLGASDFEFGVDPSADPELALALRVSMEEQRQRQEEEARRAAAASAAEAGIATTGTEDSDDALLKMTISQQEFGRTGLPDLSSMTEEEQIAYAMQMSLQGAEFGQAESADIDASSAMDTSEPAKEEDDYDVMQDPEFLQSVLENLPGVDPNNEAIRNAMGSLASQATKDGKKDKKEEDKK.

Residues 5-188 form the VWFA domain; the sequence is STMVCVDNSE…LADALISSPI (184 aa). Residue lysine 122 forms a Glycyl lysine isopeptide (Lys-Gly) (interchain with G-Cter in SUMO2) linkage. The interaction with UBQLN1 stretch occupies residues 197–262; sequence LGLGASDFEF…TEDSDDALLK (66 aa). The UIM 1 domain maps to 211–230; sequence SADPELALALRVSMEEQRQR. The tract at residues 216–220 is essential for ubiquitin-binding; the sequence is LALAL. Residues 224–237 are compositionally biased toward basic and acidic residues; it reads MEEQRQRQEEEARR. Residues 224-255 are disordered; it reads MEEQRQRQEEEARRAAAASAAEAGIATTGTED. Phosphothreonine occurs at positions 250 and 253. A phosphoserine mark is found at serine 256 and serine 266. Positions 282-301 constitute a UIM 2 domain; the sequence is TEEEQIAYAMQMSLQGAEFG. The tract at residues 287–291 is essential for ubiquitin-binding; the sequence is IAYAM. 2 disordered regions span residues 300–327 and 341–377; these read FGQA…DDYD and NLPG…EDKK. Residues serine 358 and serine 361 each carry the phosphoserine modification. Residues 365–377 show a composition bias toward basic and acidic residues; the sequence is KDGKKDKKEEDKK.

The protein belongs to the proteasome subunit S5A family. As to quaternary structure, component of the 19S proteasome regulatory particle complex. The 26S proteasome consists of a 20S core particle (CP) and two 19S regulatory subunits (RP). The regulatory particle is made of a lid composed of 9 subunits, a base containing 6 ATPases and few additional components including PSMD4. Interacts with NUB1. Interacts with SQSTM1. Interacts with UBQLN4. Interacts with UBE3A. Interacts with UBQLN1 (via ubiquitin-like domain). Interacts with DDI2.

In terms of biological role, component of the 26S proteasome, a multiprotein complex involved in the ATP-dependent degradation of ubiquitinated proteins. This complex plays a key role in the maintenance of protein homeostasis by removing misfolded or damaged proteins, which could impair cellular functions, and by removing proteins whose functions are no longer required. Therefore, the proteasome participates in numerous cellular processes, including cell cycle progression, apoptosis, or DNA damage repair. PSMD4 acts as an ubiquitin receptor subunit through ubiquitin-interacting motifs and selects ubiquitin-conjugates for destruction. Displays a preferred selectivity for longer polyubiquitin chains. The protein is 26S proteasome non-ATPase regulatory subunit 4 (PSMD4) of Homo sapiens (Human).